Here is a 206-residue protein sequence, read N- to C-terminus: Ribosomal RNA large subunit methyltransferase E (206 aa).

Positions 60, 62, 80, 96, and 121 each coordinate S-adenosyl-L-methionine. The active-site Proton acceptor is Lys-161.

Belongs to the class I-like SAM-binding methyltransferase superfamily. RNA methyltransferase RlmE family.

It is found in the cytoplasm. The enzyme catalyses uridine(2552) in 23S rRNA + S-adenosyl-L-methionine = 2'-O-methyluridine(2552) in 23S rRNA + S-adenosyl-L-homocysteine + H(+). Specifically methylates the uridine in position 2552 of 23S rRNA at the 2'-O position of the ribose in the fully assembled 50S ribosomal subunit. This chain is Ribosomal RNA large subunit methyltransferase E, found in Nitrosospira multiformis (strain ATCC 25196 / NCIMB 11849 / C 71).